A 222-amino-acid polypeptide reads, in one-letter code: Charged multivesicular body protein 4b (222 aa).

Disordered regions lie at residues 1-21 and 177-222; these read MSLI…PSPQ and NLLE…WATA. Residues 21–182 adopt a coiled-coil conformation; it reads QEAIQKLRDT…ELDKNLLEVQ (162 aa).

The protein belongs to the SNF7 family. Probable core component of the endosomal sorting required for transport complex III (ESCRT-III). ESCRT-III components are thought to multimerize to form a flat lattice on the perimeter membrane of the endosome.

The protein localises to the cytoplasm. The protein resides in the cytosol. It is found in the late endosome membrane. It localises to the midbody. Its function is as follows. Probable core component of the endosomal sorting required for transport complex III (ESCRT-III) which is involved in multivesicular bodies (MVBs) formation and sorting of endosomal cargo proteins into MVBs. MVBs contain intraluminal vesicles (ILVs) that are generated by invagination and scission from the limiting membrane of the endosome and mostly are delivered to lysosomes enabling degradation of membrane proteins, such as stimulated growth factor receptors, lysosomal enzymes and lipids. This Xenopus laevis (African clawed frog) protein is Charged multivesicular body protein 4b (chmp4b).